Here is a 402-residue protein sequence, read N- to C-terminus: Eukaryotic initiation factor 4A (402 aa).

The Q motif motif lies at 29 to 57 (ESFDDMELKEELLRGIYGFGFEKPSAIQK). In terms of domain architecture, Helicase ATP-binding spans 60–230 (IVPCTTGKDV…NRFMRNPIRI (171 aa)). 73 to 80 (AQSGTGKT) provides a ligand contact to ATP. The DEAD box signature appears at 178 to 181 (DEAD). The Helicase C-terminal domain maps to 241–402 (GIRQFYINVQ…EMPESIADLI (162 aa)).

Belongs to the DEAD box helicase family. eIF4A subfamily. EIF4F is a multi-subunit complex, the composition of which varies with external and internal environmental conditions. It is composed of at least EIF4A, EIF4E and EIF4G.

The enzyme catalyses ATP + H2O = ADP + phosphate + H(+). In terms of biological role, ATP-dependent RNA helicase which is a subunit of the eIF4F complex involved in cap recognition and is required for mRNA binding to ribosome. In the current model of translation initiation, eIF4A unwinds RNA secondary structures in the 5'-UTR of mRNAs which is necessary to allow efficient binding of the small ribosomal subunit, and subsequent scanning for the initiator codon. The chain is Eukaryotic initiation factor 4A (inf-1) from Caenorhabditis elegans.